A 242-amino-acid chain; its full sequence is Aspartate/glutamate leucyltransferase (242 aa).

Belongs to the R-transferase family. Bpt subfamily.

The protein resides in the cytoplasm. It carries out the reaction N-terminal L-glutamyl-[protein] + L-leucyl-tRNA(Leu) = N-terminal L-leucyl-L-glutamyl-[protein] + tRNA(Leu) + H(+). It catalyses the reaction N-terminal L-aspartyl-[protein] + L-leucyl-tRNA(Leu) = N-terminal L-leucyl-L-aspartyl-[protein] + tRNA(Leu) + H(+). Its function is as follows. Functions in the N-end rule pathway of protein degradation where it conjugates Leu from its aminoacyl-tRNA to the N-termini of proteins containing an N-terminal aspartate or glutamate. In Alcanivorax borkumensis (strain ATCC 700651 / DSM 11573 / NCIMB 13689 / SK2), this protein is Aspartate/glutamate leucyltransferase.